The sequence spans 385 residues: Glucans biosynthesis protein C (385 aa).

The next 10 helical transmembrane spans lie at 17–37 (AWLM…SHTW), 60–80 (MQVF…RYPL), 91–111 (VGIP…IMLQ), 137–157 (ISHL…VWIF), 173–193 (KFSM…YAVI), 212–232 (FIVM…LAFI), 239–259 (LFTT…VAYL), 274–294 (TESV…FSFG), 311–331 (ASLF…AYIT), and 338–358 (WLGF…LYEI).

The protein belongs to the acyltransferase 3 family. OpgC subfamily.

It is found in the cell membrane. It participates in glycan metabolism; osmoregulated periplasmic glucan (OPG) biosynthesis. Necessary for the succinyl substitution of periplasmic glucans. Could catalyze the transfer of succinyl residues from the cytoplasmic side of the membrane to the nascent glucan backbones on the periplasmic side of the membrane. This Shigella dysenteriae serotype 1 (strain Sd197) protein is Glucans biosynthesis protein C.